The chain runs to 95 residues: Aspartyl/glutamyl-tRNA(Asn/Gln) amidotransferase subunit C (95 aa).

The protein belongs to the GatC family. As to quaternary structure, heterotrimer of A, B and C subunits.

The enzyme catalyses L-glutamyl-tRNA(Gln) + L-glutamine + ATP + H2O = L-glutaminyl-tRNA(Gln) + L-glutamate + ADP + phosphate + H(+). It carries out the reaction L-aspartyl-tRNA(Asn) + L-glutamine + ATP + H2O = L-asparaginyl-tRNA(Asn) + L-glutamate + ADP + phosphate + 2 H(+). Allows the formation of correctly charged Asn-tRNA(Asn) or Gln-tRNA(Gln) through the transamidation of misacylated Asp-tRNA(Asn) or Glu-tRNA(Gln) in organisms which lack either or both of asparaginyl-tRNA or glutaminyl-tRNA synthetases. The reaction takes place in the presence of glutamine and ATP through an activated phospho-Asp-tRNA(Asn) or phospho-Glu-tRNA(Gln). In Chelativorans sp. (strain BNC1), this protein is Aspartyl/glutamyl-tRNA(Asn/Gln) amidotransferase subunit C.